The chain runs to 477 residues: MSPQTETKASVGFKAGVKDYKLTYYTPDYETKDTDILAAFRVSPQPGVPPEEAGAAVAAESSTGTWTTVWTDGLTSLDRYKGRCYHIESVVGEENQYIAYVAYPLDLFEEGSVTNMFTSIVGNVFGFKALRALRLEDLRIPTSYSKTFQGPPHGIQVERDKLNKYGRPLLGCTIKPKLGLSAKNYGRAVYECLRGGLDFTKDDENVNSQPFMRWRDRFLFCAEAIYKAQAETGEIKGHYLNATAGTCEEMIKRAVFARELGAPIVMHDYLTGGFTANTSLAHYCRDNGLLLHIHRAMHAVIDRQKNHGMHFRVLAKALRMSGGDHIHAGTVVGKLEGEREMTLGFVDLLRDDFIEKDRSRGIFFTQDWVSMPGVLPVASGGIHVWHMPALTEIFGDDSVLQFGGGTLGHPWGNAPGAVANRVALEACVQARNEGRDLAREGNEIIREACKWSPELAAACEVWKEIKFEFKPVDTLDL.

A propeptide spanning residues 1–2 is cleaved from the precursor; the sequence is MS. At Pro-3 the chain carries N-acetylproline. Lys-14 is modified (N6,N6,N6-trimethyllysine). The substrate site is built by Asn-123 and Thr-173. Lys-175 functions as the Proton acceptor in the catalytic mechanism. Lys-177 serves as a coordination point for substrate. Mg(2+) contacts are provided by Lys-201, Asp-203, and Glu-204. Position 201 is an N6-carboxylysine (Lys-201). Catalysis depends on His-294, which acts as the Proton acceptor. Residues Arg-295, His-327, and Ser-379 each contribute to the substrate site.

The protein belongs to the RuBisCO large chain family. Type I subfamily. In terms of assembly, heterohexadecamer of 8 large chains and 8 small chains; disulfide-linked. The disulfide link is formed within the large subunit homodimers. The cofactor is Mg(2+). Post-translationally, the disulfide bond which can form in the large chain dimeric partners within the hexadecamer appears to be associated with oxidative stress and protein turnover.

It localises to the plastid. The protein localises to the chloroplast. The enzyme catalyses 2 (2R)-3-phosphoglycerate + 2 H(+) = D-ribulose 1,5-bisphosphate + CO2 + H2O. It catalyses the reaction D-ribulose 1,5-bisphosphate + O2 = 2-phosphoglycolate + (2R)-3-phosphoglycerate + 2 H(+). Its function is as follows. RuBisCO catalyzes two reactions: the carboxylation of D-ribulose 1,5-bisphosphate, the primary event in carbon dioxide fixation, as well as the oxidative fragmentation of the pentose substrate in the photorespiration process. Both reactions occur simultaneously and in competition at the same active site. In Dioscorea elephantipes (Elephant's foot yam), this protein is Ribulose bisphosphate carboxylase large chain.